We begin with the raw amino-acid sequence, 614 residues long: Phosphomethylpyrimidine synthase (614 aa).

Over residues 1–16 the composition is skewed to low complexity; sequence MNAQLSALQQQAQQLS. The segment at 1-36 is disordered; sequence MNAQLSALQQQAQQLSESVTRPIPGSRKIHVPGSRP. Substrate-binding positions include Asn230, Met259, Tyr288, His324, 344 to 346, 385 to 388, and Glu424; these read SRG and DGLR. His428 is a binding site for Zn(2+). Residue Tyr451 coordinates substrate. A Zn(2+)-binding site is contributed by His492. 3 residues coordinate [4Fe-4S] cluster: Cys572, Cys575, and Cys580.

The protein belongs to the ThiC family. In terms of assembly, homodimer. Requires [4Fe-4S] cluster as cofactor.

It carries out the reaction 5-amino-1-(5-phospho-beta-D-ribosyl)imidazole + S-adenosyl-L-methionine = 4-amino-2-methyl-5-(phosphooxymethyl)pyrimidine + CO + 5'-deoxyadenosine + formate + L-methionine + 3 H(+). The protein operates within cofactor biosynthesis; thiamine diphosphate biosynthesis. In terms of biological role, catalyzes the synthesis of the hydroxymethylpyrimidine phosphate (HMP-P) moiety of thiamine from aminoimidazole ribotide (AIR) in a radical S-adenosyl-L-methionine (SAM)-dependent reaction. The protein is Phosphomethylpyrimidine synthase of Stenotrophomonas maltophilia (strain R551-3).